A 142-amino-acid polypeptide reads, in one-letter code: Cytochrome c-type biogenesis protein CcmE (142 aa).

Over M1–K2 the chain is Cytoplasmic. A helical; Signal-anchor for type II membrane protein transmembrane segment spans residues G3–G23. Over L24 to Q142 the chain is Periplasmic. Heme contacts are provided by H118 and Y122.

This sequence belongs to the CcmE/CycJ family.

The protein resides in the cell inner membrane. In terms of biological role, heme chaperone required for the biogenesis of c-type cytochromes. Transiently binds heme delivered by CcmC and transfers the heme to apo-cytochromes in a process facilitated by CcmF and CcmH. This chain is Cytochrome c-type biogenesis protein CcmE, found in Thermus thermophilus (strain ATCC 27634 / DSM 579 / HB8).